The following is a 579-amino-acid chain: 2-succinyl-5-enolpyruvyl-6-hydroxy-3-cyclohexene-1-carboxylate synthase (579 aa).

This sequence belongs to the TPP enzyme family. MenD subfamily. As to quaternary structure, homodimer. Mg(2+) serves as cofactor. It depends on Mn(2+) as a cofactor. Requires thiamine diphosphate as cofactor.

It catalyses the reaction isochorismate + 2-oxoglutarate + H(+) = 5-enolpyruvoyl-6-hydroxy-2-succinyl-cyclohex-3-ene-1-carboxylate + CO2. The protein operates within quinol/quinone metabolism; 1,4-dihydroxy-2-naphthoate biosynthesis; 1,4-dihydroxy-2-naphthoate from chorismate: step 2/7. It participates in quinol/quinone metabolism; menaquinone biosynthesis. Functionally, catalyzes the thiamine diphosphate-dependent decarboxylation of 2-oxoglutarate and the subsequent addition of the resulting succinic semialdehyde-thiamine pyrophosphate anion to isochorismate to yield 2-succinyl-5-enolpyruvyl-6-hydroxy-3-cyclohexene-1-carboxylate (SEPHCHC). This is 2-succinyl-5-enolpyruvyl-6-hydroxy-3-cyclohexene-1-carboxylate synthase from Oceanobacillus iheyensis (strain DSM 14371 / CIP 107618 / JCM 11309 / KCTC 3954 / HTE831).